A 438-amino-acid polypeptide reads, in one-letter code: 23S rRNA (uracil(1939)-C(5))-methyltransferase RlmD (438 aa).

In terms of domain architecture, TRAM spans 4-68; the sequence is FYTPGRRTAT…RHFARGRVTR (65 aa). The [4Fe-4S] cluster site is built by cysteine 81, cysteine 87, cysteine 90, and cysteine 167. S-adenosyl-L-methionine is bound by residues glutamine 269, phenylalanine 298, asparagine 303, glutamate 319, asparagine 346, and aspartate 367. Cysteine 393 (nucleophile) is an active-site residue.

This sequence belongs to the class I-like SAM-binding methyltransferase superfamily. RNA M5U methyltransferase family. RlmD subfamily.

The catalysed reaction is uridine(1939) in 23S rRNA + S-adenosyl-L-methionine = 5-methyluridine(1939) in 23S rRNA + S-adenosyl-L-homocysteine + H(+). Catalyzes the formation of 5-methyl-uridine at position 1939 (m5U1939) in 23S rRNA. The polypeptide is 23S rRNA (uracil(1939)-C(5))-methyltransferase RlmD (Edwardsiella ictaluri (strain 93-146)).